Reading from the N-terminus, the 91-residue chain is Large ribosomal subunit protein eL43 (91 aa).

A C4-type zinc finger spans residues 39 to 60 (CSFCGKEAMKRKATGIWNCAKC).

It belongs to the eukaryotic ribosomal protein eL43 family.

This Caenorhabditis elegans protein is Large ribosomal subunit protein eL43.